Reading from the N-terminus, the 356-residue chain is Protein-glutamate methylesterase/protein-glutamine glutaminase 2 (356 aa).

One can recognise a Response regulatory domain in the interval Lys-4 to Glu-121. Asp-55 is modified (4-aspartylphosphate). Residues Phe-169–Arg-356 enclose the CheB-type methylesterase domain. Residues Ser-181, His-207, and Asp-303 contribute to the active site.

The protein belongs to the CheB family. Post-translationally, phosphorylated by CheA. Phosphorylation of the N-terminal regulatory domain activates the methylesterase activity.

It is found in the cytoplasm. The catalysed reaction is [protein]-L-glutamate 5-O-methyl ester + H2O = L-glutamyl-[protein] + methanol + H(+). It catalyses the reaction L-glutaminyl-[protein] + H2O = L-glutamyl-[protein] + NH4(+). In terms of biological role, involved in chemotaxis. Part of a chemotaxis signal transduction system that modulates chemotaxis in response to various stimuli. Catalyzes the demethylation of specific methylglutamate residues introduced into the chemoreceptors (methyl-accepting chemotaxis proteins or MCP) by CheR. Also mediates the irreversible deamidation of specific glutamine residues to glutamic acid. This chain is Protein-glutamate methylesterase/protein-glutamine glutaminase 2, found in Chromobacterium violaceum (strain ATCC 12472 / DSM 30191 / JCM 1249 / CCUG 213 / NBRC 12614 / NCIMB 9131 / NCTC 9757 / MK).